We begin with the raw amino-acid sequence, 387 residues long: 3-ketoacyl-CoA thiolase (387 aa).

Catalysis depends on Cys-91, which acts as the Acyl-thioester intermediate. Residues His-343 and Cys-373 each act as proton acceptor in the active site.

The protein belongs to the thiolase-like superfamily. Thiolase family. As to quaternary structure, heterotetramer of two alpha chains (FadB) and two beta chains (FadA).

It is found in the cytoplasm. The enzyme catalyses an acyl-CoA + acetyl-CoA = a 3-oxoacyl-CoA + CoA. It functions in the pathway lipid metabolism; fatty acid beta-oxidation. In terms of biological role, catalyzes the final step of fatty acid oxidation in which acetyl-CoA is released and the CoA ester of a fatty acid two carbons shorter is formed. This is 3-ketoacyl-CoA thiolase from Shewanella sp. (strain ANA-3).